We begin with the raw amino-acid sequence, 89 residues long: Acylphosphatase (89 aa).

Positions Arg-3–Lys-89 constitute an Acylphosphatase-like domain. Residues Arg-18 and Asn-36 contribute to the active site.

This sequence belongs to the acylphosphatase family.

It catalyses the reaction an acyl phosphate + H2O = a carboxylate + phosphate + H(+). This Frankia casuarinae (strain DSM 45818 / CECT 9043 / HFP020203 / CcI3) protein is Acylphosphatase (acyP).